We begin with the raw amino-acid sequence, 802 residues long: Leucine--tRNA ligase (802 aa).

The 'HIGH' region motif lies at 40-51; it reads PYPSGAGLHVGH. Residues 576 to 580 carry the 'KMSKS' region motif; it reads KMSKS. Lys579 contacts ATP.

Belongs to the class-I aminoacyl-tRNA synthetase family.

Its subcellular location is the cytoplasm. It catalyses the reaction tRNA(Leu) + L-leucine + ATP = L-leucyl-tRNA(Leu) + AMP + diphosphate. This Bacillus anthracis (strain A0248) protein is Leucine--tRNA ligase.